Consider the following 160-residue polypeptide: Phosphopantetheine adenylyltransferase (160 aa).

Serine 10 is a substrate binding site. Residues 10–11 and histidine 18 each bind ATP; that span reads SF. Lysine 42, threonine 74, and arginine 88 together coordinate substrate. Residues 89 to 91, glutamate 99, and 124 to 130 each bind ATP; these read GLR and YSFISST.

The protein belongs to the bacterial CoaD family. Homohexamer. Mg(2+) serves as cofactor.

The protein localises to the cytoplasm. It carries out the reaction (R)-4'-phosphopantetheine + ATP + H(+) = 3'-dephospho-CoA + diphosphate. It functions in the pathway cofactor biosynthesis; coenzyme A biosynthesis; CoA from (R)-pantothenate: step 4/5. Reversibly transfers an adenylyl group from ATP to 4'-phosphopantetheine, yielding dephospho-CoA (dPCoA) and pyrophosphate. This is Phosphopantetheine adenylyltransferase from Leptospira interrogans serogroup Icterohaemorrhagiae serovar copenhageni (strain Fiocruz L1-130).